The following is a 487-amino-acid chain: V-type proton ATPase subunit B2 (487 aa).

At glycine 2 the chain carries N-acetylglycine.

Belongs to the ATPase alpha/beta chains family. In terms of assembly, V-ATPase is a heteromultimeric enzyme composed of a peripheral catalytic V1 complex (components A to H) attached to an integral membrane V0 proton pore complex (components: a, c, c'', d and e).

Its subcellular location is the vacuole membrane. Its function is as follows. Non-catalytic subunit of the peripheral V1 complex of vacuolar ATPase. V-ATPase is responsible for acidifying a variety of intracellular compartments in eukaryotic cells. This Arabidopsis thaliana (Mouse-ear cress) protein is V-type proton ATPase subunit B2 (VHA-B2).